Here is a 218-residue protein sequence, read N- to C-terminus: Ribose-5-phosphate isomerase A (218 aa).

Substrate-binding positions include 28–31 (TGST), 81–84 (DSAD), and 94–97 (KGGG). Catalysis depends on Glu-103, which acts as the Proton acceptor. Lys-121 is a binding site for substrate.

The protein belongs to the ribose 5-phosphate isomerase family. In terms of assembly, homodimer.

The catalysed reaction is aldehydo-D-ribose 5-phosphate = D-ribulose 5-phosphate. It functions in the pathway carbohydrate degradation; pentose phosphate pathway; D-ribose 5-phosphate from D-ribulose 5-phosphate (non-oxidative stage): step 1/1. In terms of biological role, catalyzes the reversible conversion of ribose-5-phosphate to ribulose 5-phosphate. The protein is Ribose-5-phosphate isomerase A of Buchnera aphidicola subsp. Baizongia pistaciae (strain Bp).